The sequence spans 712 residues: Interleukin-1 receptor-associated kinase 1 (712 aa).

The Death domain maps to 27–106 (MCRFYKVMDA…DIITAWHPPA (80 aa)). Phosphothreonine; by PKC/PRKCI is present on Thr66. The disordered stretch occupies residues 105-187 (PAPLPSPGTT…STKPGPESSV (83 aa)). Positions 110-211 (SPGTTAPRPS…LCEISRGTHN (102 aa)) are proST region. Low complexity predominate over residues 115–133 (APRPSSIPAPAEAEAWSPR). Ser131 is modified (phosphoserine). Lys134 is covalently cross-linked (Glycyl lysine isopeptide (Lys-Gly) (interchain with G-Cter in ubiquitin)). Over residues 137–154 (SSASTFLSPAFPGSQTHS) the composition is skewed to polar residues. Lys180 is covalently cross-linked (Glycyl lysine isopeptide (Lys-Gly) (interchain with G-Cter in ubiquitin)). Thr209 carries the phosphothreonine; by IRAK4 modification. Residues 212–521 (FSEELKIGEG…TQVYERLEKL (310 aa)) form the Protein kinase domain. Residues 218 to 226 (IGEGGFGCV) and Lys239 contribute to the ATP site. Asp340 (proton acceptor) is an active-site residue. ATP contacts are provided by residues 342 to 345 (KSSN) and Asp358. 2 positions are modified to phosphoserine: Ser371 and Ser375. Thr387 is modified (phosphothreonine). 3 disordered regions span residues 532-591 (SEAA…SDES), 613-660 (APLR…PPQI), and 690-712 (SSLP…EFQS). Over residues 543-553 (QENSYVSSTGR) the composition is skewed to polar residues. Phosphoserine is present on Ser556. Composition is skewed to low complexity over residues 562 to 575 (QPLA…AQAA) and 643 to 658 (EGLA…SEPP).

The protein belongs to the protein kinase superfamily. TKL Ser/Thr protein kinase family. Pelle subfamily. Homodimer. Forms a complex with TRAF6, PELI1, IRAK4 and MYD88. Direct binding of SMAD6 to PELI1 prevents complex formation and hence negatively regulates IL1R-TLR signaling and eventually NF-kappa-B-mediated gene expression. The TRAF6-PELI1-IRAK4-MYD88 complex recruits MAP3K7/TAK1, TAB1 and TAB2 to mediate NF-kappa-B activation. Interaction with MYD88 recruits IRAK1 to the stimulated receptor complex. Interacts with TOLLIP; this interaction occurs in the cytosol prior to receptor activation. Interacts with IL1RL1. Interacts with PELI1 and TRAF6. Interacts (when polyubiquitinated) with IKBKG/NEMO. Interacts with RSAD2/viperin. Interacts with IRAK1BP1. Interacts with PELI2. Interacts with ZC3H12A; this interaction increases the interaction between ZC3H12A and IKBKB/IKKB. Interacts with IRAK4. Interacts with PELI3. Interacts with INAVA; the interaction takes place upon PRR stimulation. Interacts (via C-terminus) with NFATC4 (via N-terminus). In terms of assembly, (Microbial infection) Interacts with mumps virus protein SH; this interaction inhibits downstream NF-kappa-B pathway activation. As to quaternary structure, (Microbial infection) Interacts with alphaviruses SINV, CHIKV, RRV, VEEV and EEEV capsid proteins; the interactions lead to inhibition of IRAK1-dependent signaling. Mg(2+) is required as a cofactor. Following recruitment on the activated receptor complex, phosphorylated on Thr-209, probably by IRAK4, resulting in a conformational change of the kinase domain, allowing further phosphorylations to take place. Thr-387 phosphorylation in the activation loop is required to achieve full enzymatic activity. In terms of processing, polyubiquitinated by TRAF6 after cell stimulation with IL-1-beta by PELI1, PELI2 and PELI3. Polyubiquitination occurs with polyubiquitin chains linked through 'Lys-63'. Ubiquitination promotes interaction with NEMO/IKBKG. Also sumoylated; leading to nuclear translocation. As to expression, isoform 1 and isoform 2 are ubiquitously expressed in all tissues examined, with isoform 1 being more strongly expressed than isoform 2.

It is found in the cytoplasm. It localises to the nucleus. The protein localises to the lipid droplet. The enzyme catalyses L-seryl-[protein] + ATP = O-phospho-L-seryl-[protein] + ADP + H(+). It catalyses the reaction L-threonyl-[protein] + ATP = O-phospho-L-threonyl-[protein] + ADP + H(+). Serine/threonine-protein kinase that plays a critical role in initiating innate immune response against foreign pathogens. Involved in Toll-like receptor (TLR) and IL-1R signaling pathways. Is rapidly recruited by MYD88 to the receptor-signaling complex upon TLR activation. Association with MYD88 leads to IRAK1 phosphorylation by IRAK4 and subsequent autophosphorylation and kinase activation. Phosphorylates E3 ubiquitin ligases Pellino proteins (PELI1, PELI2 and PELI3) to promote pellino-mediated polyubiquitination of IRAK1. Then, the ubiquitin-binding domain of IKBKG/NEMO binds to polyubiquitinated IRAK1 bringing together the IRAK1-MAP3K7/TAK1-TRAF6 complex and the NEMO-IKKA-IKKB complex. In turn, MAP3K7/TAK1 activates IKKs (CHUK/IKKA and IKBKB/IKKB) leading to NF-kappa-B nuclear translocation and activation. Alternatively, phosphorylates TIRAP to promote its ubiquitination and subsequent degradation. Phosphorylates the interferon regulatory factor 7 (IRF7) to induce its activation and translocation to the nucleus, resulting in transcriptional activation of type I IFN genes, which drive the cell in an antiviral state. When sumoylated, translocates to the nucleus and phosphorylates STAT3. The polypeptide is Interleukin-1 receptor-associated kinase 1 (Homo sapiens (Human)).